The primary structure comprises 126 residues: Small ribosomal subunit protein uS12 (126 aa).

Positions 1-16 are enriched in polar residues; that stretch reads MPTVNQLVRQGRTMNK. The tract at residues 1–24 is disordered; sequence MPTVNQLVRQGRTMNKTKTKSPAL. D89 is subject to 3-methylthioaspartic acid.

The protein belongs to the universal ribosomal protein uS12 family. As to quaternary structure, part of the 30S ribosomal subunit. Contacts proteins S8 and S17. May interact with IF1 in the 30S initiation complex.

With S4 and S5 plays an important role in translational accuracy. Functionally, interacts with and stabilizes bases of the 16S rRNA that are involved in tRNA selection in the A site and with the mRNA backbone. Located at the interface of the 30S and 50S subunits, it traverses the body of the 30S subunit contacting proteins on the other side and probably holding the rRNA structure together. The combined cluster of proteins S8, S12 and S17 appears to hold together the shoulder and platform of the 30S subunit. The polypeptide is Small ribosomal subunit protein uS12 (Elusimicrobium minutum (strain Pei191)).